A 68-amino-acid polypeptide reads, in one-letter code: Large ribosomal subunit protein bL35 (68 aa).

Residues 1 to 25 (MGTKIKTHKGTKKRFRLSAKGKAMH) are compositionally biased toward basic residues. The tract at residues 1 to 43 (MGTKIKTHKGTKKRFRLSAKGKAMHRQSGTSHLAKGLSKKRRR) is disordered.

It belongs to the bacterial ribosomal protein bL35 family.

The protein is Large ribosomal subunit protein bL35 of Rhodopirellula baltica (strain DSM 10527 / NCIMB 13988 / SH1).